A 650-amino-acid polypeptide reads, in one-letter code: Pentatricopeptide repeat-containing protein At2g41080 (650 aa).

PPR repeat units lie at residues 43 to 77 (NTSL…GFSS), 78 to 112 (DKFI…NYMS), 114 to 139 (NILI…MPDR), 140 to 174 (KLTT…GFSP), 175 to 209 (DEYT…GLEL), 210 to 240 (DLVV…MPVR), 241 to 275 (NLVA…GCRP), 276 to 310 (NKIT…GASS), 311 to 341 (VVAV…REDE), 342 to 372 (DEVM…MAEQ), 378 to 413 (NEVA…GFKP), and 414 to 444 (GLKH…MPIK). Residues 449 to 524 (IWKTLLSACN…EAGISWFEHK (76 aa)) are type E motif. The tract at residues 525–555 (GEVHQFKMGDRSQSKSKEIYSYLKELTLEMK) is type E(+) motif. Residues 556–650 (LKGYKPDTAS…NGKCSCGDYW (95 aa)) are type DYW motif.

The protein belongs to the PPR family. PCMP-H subfamily.

The polypeptide is Pentatricopeptide repeat-containing protein At2g41080 (PCMP-H29) (Arabidopsis thaliana (Mouse-ear cress)).